The primary structure comprises 312 residues: Methionyl-tRNA formyltransferase (312 aa).

(6S)-5,6,7,8-tetrahydrofolate is bound at residue 109-112; it reads SLLP.

This sequence belongs to the Fmt family.

It carries out the reaction L-methionyl-tRNA(fMet) + (6R)-10-formyltetrahydrofolate = N-formyl-L-methionyl-tRNA(fMet) + (6S)-5,6,7,8-tetrahydrofolate + H(+). Its function is as follows. Attaches a formyl group to the free amino group of methionyl-tRNA(fMet). The formyl group appears to play a dual role in the initiator identity of N-formylmethionyl-tRNA by promoting its recognition by IF2 and preventing the misappropriation of this tRNA by the elongation apparatus. The protein is Methionyl-tRNA formyltransferase of Listeria monocytogenes serotype 4b (strain CLIP80459).